Consider the following 520-residue polypeptide: UDP-N-acetylmuramoyl-L-alanyl-D-glutamate--2,6-diaminopimelate ligase (520 aa).

Residue Leu-48 participates in UDP-N-acetyl-alpha-D-muramoyl-L-alanyl-D-glutamate binding. 134–140 (GTSGKTT) lines the ATP pocket. UDP-N-acetyl-alpha-D-muramoyl-L-alanyl-D-glutamate-binding positions include 176 to 177 (TT), Ser-203, and Arg-211. The residue at position 243 (Lys-243) is an N6-carboxylysine. Meso-2,6-diaminopimelate-binding positions include Arg-405, 429 to 432 (DNPR), Gly-483, and Glu-487. Positions 429–432 (DNPR) match the Meso-diaminopimelate recognition motif motif.

This sequence belongs to the MurCDEF family. MurE subfamily. Requires Mg(2+) as cofactor. Carboxylation is probably crucial for Mg(2+) binding and, consequently, for the gamma-phosphate positioning of ATP.

The protein resides in the cytoplasm. The catalysed reaction is UDP-N-acetyl-alpha-D-muramoyl-L-alanyl-D-glutamate + meso-2,6-diaminopimelate + ATP = UDP-N-acetyl-alpha-D-muramoyl-L-alanyl-gamma-D-glutamyl-meso-2,6-diaminopimelate + ADP + phosphate + H(+). It functions in the pathway cell wall biogenesis; peptidoglycan biosynthesis. In terms of biological role, catalyzes the addition of meso-diaminopimelic acid to the nucleotide precursor UDP-N-acetylmuramoyl-L-alanyl-D-glutamate (UMAG) in the biosynthesis of bacterial cell-wall peptidoglycan. The sequence is that of UDP-N-acetylmuramoyl-L-alanyl-D-glutamate--2,6-diaminopimelate ligase from Mycobacterium avium (strain 104).